Reading from the N-terminus, the 172-residue chain is Large ribosomal subunit protein uL10 (172 aa).

This sequence belongs to the universal ribosomal protein uL10 family. In terms of assembly, part of the ribosomal stalk of the 50S ribosomal subunit. The N-terminus interacts with L11 and the large rRNA to form the base of the stalk. The C-terminus forms an elongated spine to which L12 dimers bind in a sequential fashion forming a multimeric L10(L12)X complex.

In terms of biological role, forms part of the ribosomal stalk, playing a central role in the interaction of the ribosome with GTP-bound translation factors. The sequence is that of Large ribosomal subunit protein uL10 (rplJ) from Caulobacter vibrioides (strain ATCC 19089 / CIP 103742 / CB 15) (Caulobacter crescentus).